Reading from the N-terminus, the 312-residue chain is Probable cell division protein WhiA (312 aa).

Positions 274 to 308 (SLKELGTLVPGGPISKSGVNHRLRKLNAYADELRQ) form a DNA-binding region, H-T-H motif.

It belongs to the WhiA family.

Its function is as follows. Involved in cell division and chromosome segregation. The chain is Probable cell division protein WhiA from Limosilactobacillus fermentum (strain NBRC 3956 / LMG 18251) (Lactobacillus fermentum).